The sequence spans 380 residues: MHICNIIEKIKKIDLFHPVSIVIIGHLMIFILAFPYLDDIGLYSLFKILGVLSIFIVGFFLPFIFPMQIKFNRHILYLSFLLLSFLSIFGAFKITHSLFLSIAYLLFILIIAELFVKFYKKKIFVDILFSIGIIAFLLIVLIYGAIPLFNYEVRMTINSEPLRLISMGALIYAGIENKVYFIIAFMILVLLGYKAGVLMLFIAYIIYRYRNILFKYMVLLAFALLIFLGIMGKIILLSSNQNWDLNPIELLCYRAYFDLYVLSKIVESNILTLGKITLTPNGEHFIGELLFKYPHNITTTLFGTIYLDFGIFGGLFAMLLGVISKYIYEGDKKLYAIYASLLLAYCEIGINYGFLVVLSLLLYINAKLVFAKLLKLINEL.

9 helical membrane passes run 15–35 (LFHP…LAFP), 45–65 (LFKI…PFIF), 75–95 (ILYL…FKIT), 98–118 (LFLS…FVKF), 123–143 (IFVD…VLIY), 182–202 (IIAF…MLFI), 217–237 (MVLL…IILL), 303–323 (GTIY…LGVI), and 341–361 (LLLA…LSLL).

It localises to the cell membrane. This is an uncharacterized protein from Methanocaldococcus jannaschii (strain ATCC 43067 / DSM 2661 / JAL-1 / JCM 10045 / NBRC 100440) (Methanococcus jannaschii).